The primary structure comprises 740 residues: Ribosome-releasing factor 2, mitochondrial (740 aa).

A mitochondrion-targeting transit peptide spans 1–29 (MLKYAWQSGPKQSNRWLWHLSNQIWKRSY). One can recognise a tr-type G domain in the interval 31–310 (SKIRNIGILA…AVNAYLPAPE (280 aa)). GTP-binding positions include 40–47 (AHIDAGKT), 104–108 (DTPGH), and 158–161 (NKMD).

The protein belongs to the TRAFAC class translation factor GTPase superfamily. Classic translation factor GTPase family. EF-G/EF-2 subfamily.

Its subcellular location is the mitochondrion. In terms of biological role, mitochondrial GTPase that mediates the disassembly of ribosomes from messenger RNA at the termination of mitochondrial protein biosynthesis. Not involved in the GTP-dependent ribosomal translocation step during translation elongation. The sequence is that of Ribosome-releasing factor 2, mitochondrial from Drosophila melanogaster (Fruit fly).